The following is a 351-amino-acid chain: Uroporphyrinogen decarboxylase (351 aa).

Residues 25–29 (RQAGR), D74, Y151, S206, and H325 each bind substrate.

Belongs to the uroporphyrinogen decarboxylase family. In terms of assembly, homodimer.

Its subcellular location is the cytoplasm. It carries out the reaction uroporphyrinogen III + 4 H(+) = coproporphyrinogen III + 4 CO2. It functions in the pathway porphyrin-containing compound metabolism; protoporphyrin-IX biosynthesis; coproporphyrinogen-III from 5-aminolevulinate: step 4/4. Catalyzes the decarboxylation of four acetate groups of uroporphyrinogen-III to yield coproporphyrinogen-III. In Prosthecochloris aestuarii (strain DSM 271 / SK 413), this protein is Uroporphyrinogen decarboxylase.